The chain runs to 342 residues: Succinylglutamate desuccinylase (342 aa).

Zn(2+) is bound by residues His63, Glu66, and His155. Glu219 is an active-site residue.

This sequence belongs to the AspA/AstE family. Succinylglutamate desuccinylase subfamily. It depends on Zn(2+) as a cofactor.

The catalysed reaction is N-succinyl-L-glutamate + H2O = L-glutamate + succinate. It participates in amino-acid degradation; L-arginine degradation via AST pathway; L-glutamate and succinate from L-arginine: step 5/5. In terms of biological role, transforms N(2)-succinylglutamate into succinate and glutamate. In Vibrio campbellii (strain ATCC BAA-1116), this protein is Succinylglutamate desuccinylase.